We begin with the raw amino-acid sequence, 299 residues long: Very long chain fatty acid elongase 5 (299 aa).

M1 carries the post-translational modification N-acetylmethionine. 6 consecutive transmembrane segments (helical) span residues 26-46 (WFLLDNYIPTFICSVIYLLIV), 64-84 (ILVVYNLGLTLLSLYMFCELV), 112-132 (VLRWYYFSKLIEFMDTFFFIL), 150-170 (MLNIWWFVMNWVPCGHSYFGA), 205-225 (GQLLQFVLTIIQTSCGVIWPC), and 226-246 (TFPLGWLYFQIGYMISLIALF). Positions 275-299 (AAVNGHTNSFSPLENNVKPRKLRKD) are disordered. Residues 279 to 288 (GHTNSFSPLE) show a composition bias toward polar residues. Residue S285 is modified to Phosphoserine.

Belongs to the ELO family. ELOVL5 subfamily. In terms of assembly, interacts with TECR.

It is found in the endoplasmic reticulum membrane. It localises to the cell projection. Its subcellular location is the dendrite. It carries out the reaction a very-long-chain acyl-CoA + malonyl-CoA + H(+) = a very-long-chain 3-oxoacyl-CoA + CO2 + CoA. It catalyses the reaction (6Z,9Z,12Z)-octadecatrienoyl-CoA + malonyl-CoA + H(+) = (8Z,11Z,14Z)-3-oxoeicosatrienoyl-CoA + CO2 + CoA. The enzyme catalyses (9Z,12Z,15Z)-octadecatrienoyl-CoA + malonyl-CoA + H(+) = (11Z,14Z,17Z)-3-oxoeicosatrienoyl-CoA + CO2 + CoA. The catalysed reaction is (9Z)-hexadecenoyl-CoA + malonyl-CoA + H(+) = 3-oxo-(11Z)-octadecenoyl-CoA + CO2 + CoA. It carries out the reaction (9Z)-octadecenoyl-CoA + malonyl-CoA + H(+) = 3-oxo-(11Z)-eicosenoyl-CoA + CO2 + CoA. It catalyses the reaction (11Z)-octadecenoyl-CoA + malonyl-CoA + H(+) = 3-oxo-(13Z)-eicosenoyl-CoA + CO2 + CoA. The enzyme catalyses (9Z,12Z)-octadecadienoyl-CoA + malonyl-CoA + H(+) = (11Z,14Z)-3-oxoicosa-11,14-dienoyl-CoA + CO2 + CoA. The catalysed reaction is (6Z,9Z,12Z,15Z)-octadecatetraenoyl-CoA + malonyl-CoA + H(+) = (8Z,11Z,14Z,17Z)-3-oxoicosatetraenoyl-CoA + CO2 + CoA. It carries out the reaction (5Z,8Z,11Z,14Z)-eicosatetraenoyl-CoA + malonyl-CoA + H(+) = (7Z,10Z,13Z,16Z)-3-oxodocosatetraenoyl-CoA + CO2 + CoA. It catalyses the reaction (5Z,8Z,11Z,14Z,17Z)-eicosapentaenoyl-CoA + malonyl-CoA + H(+) = 3-oxo-(7Z,10Z,13Z,16Z,19Z)-docosapentaenoyl-CoA + CO2 + CoA. The protein operates within lipid metabolism; polyunsaturated fatty acid biosynthesis. Functionally, catalyzes the first and rate-limiting reaction of the four reactions that constitute the long-chain fatty acids elongation cycle. This endoplasmic reticulum-bound enzymatic process allows the addition of 2 carbons to the chain of long- and very long-chain fatty acids (VLCFAs) per cycle. Condensing enzyme that acts specifically toward polyunsaturated acyl-CoA with the higher activity toward C18:3(n-6) acyl-CoA. May participate in the production of monounsaturated and of polyunsaturated VLCFAs of different chain lengths that are involved in multiple biological processes as precursors of membrane lipids and lipid mediators. In conditions where the essential linoleic and alpha linoleic fatty acids are lacking it is also involved in the synthesis of Mead acid from oleic acid. The polypeptide is Very long chain fatty acid elongase 5 (Macaca fascicularis (Crab-eating macaque)).